A 319-amino-acid polypeptide reads, in one-letter code: Dehydrogenase/reductase SDR family member 9 (319 aa).

A signal peptide spans 1–20 (MLLWVLALLFLCAFLWNYKG). Residues 34–58 (ITGCDSGFGNLAARTFDRKGFRVIA) and aspartate 83 each bind NAD(+). Serine 164 contacts substrate. Tyrosine 176 serves as the catalytic Proton acceptor. Lysine 180 contributes to the NAD(+) binding site.

Belongs to the short-chain dehydrogenases/reductases (SDR) family. In terms of assembly, homotetramer. Highly expressed in epithelium of estrus uterus.

The protein resides in the microsome membrane. It localises to the endoplasmic reticulum membrane. It catalyses the reaction 3beta-hydroxy-5alpha-pregnane-20-one + NAD(+) = 5alpha-pregnane-3,20-dione + NADH + H(+). The enzyme catalyses 17beta-hydroxy-5alpha-androstan-3-one + NAD(+) = 5alpha-androstan-3,17-dione + NADH + H(+). It carries out the reaction androsterone + NAD(+) = 5alpha-androstan-3,17-dione + NADH + H(+). The catalysed reaction is 5alpha-androstane-3alpha,17beta-diol + NAD(+) = 17beta-hydroxy-5alpha-androstan-3-one + NADH + H(+). It catalyses the reaction all-trans-retinol + NAD(+) = all-trans-retinal + NADH + H(+). The enzyme catalyses 3alpha-hydroxy-5alpha-pregnan-20-one + NAD(+) = 5alpha-pregnane-3,20-dione + NADH + H(+). Functionally, 3-alpha-hydroxysteroid dehydrogenase that converts 3-alpha-tetrahydroprogesterone (allopregnanolone) to dihydroxyprogesterone and 3-alpha-androstanediol to dihydroxyprogesterone. Plays also role in the biosynthesis of retinoic acid from retinaldehyde. Can utilize both NADH and NADPH. The chain is Dehydrogenase/reductase SDR family member 9 (Dhrs9) from Rattus norvegicus (Rat).